The chain runs to 351 residues: Lipoyl synthase (351 aa).

Positions methionine 1 to valine 10 are enriched in polar residues. The tract at residues methionine 1–arginine 27 is disordered. Over residues proline 14–proline 24 the composition is skewed to low complexity. The [4Fe-4S] cluster site is built by cysteine 74, cysteine 79, cysteine 85, cysteine 100, cysteine 104, cysteine 107, and serine 311. A Radical SAM core domain is found at tryptophan 86–serine 300.

The protein belongs to the radical SAM superfamily. Lipoyl synthase family. [4Fe-4S] cluster serves as cofactor.

The protein resides in the cytoplasm. It catalyses the reaction [[Fe-S] cluster scaffold protein carrying a second [4Fe-4S](2+) cluster] + N(6)-octanoyl-L-lysyl-[protein] + 2 oxidized [2Fe-2S]-[ferredoxin] + 2 S-adenosyl-L-methionine + 4 H(+) = [[Fe-S] cluster scaffold protein] + N(6)-[(R)-dihydrolipoyl]-L-lysyl-[protein] + 4 Fe(3+) + 2 hydrogen sulfide + 2 5'-deoxyadenosine + 2 L-methionine + 2 reduced [2Fe-2S]-[ferredoxin]. The protein operates within protein modification; protein lipoylation via endogenous pathway; protein N(6)-(lipoyl)lysine from octanoyl-[acyl-carrier-protein]: step 2/2. Functionally, catalyzes the radical-mediated insertion of two sulfur atoms into the C-6 and C-8 positions of the octanoyl moiety bound to the lipoyl domains of lipoate-dependent enzymes, thereby converting the octanoylated domains into lipoylated derivatives. The protein is Lipoyl synthase of Tropheryma whipplei (strain TW08/27) (Whipple's bacillus).